Reading from the N-terminus, the 425-residue chain is Pectate lyase L (425 aa).

A signal peptide spans 1–25 (MKYLNCFISTGLAAFFLVNSTSVLA). An intrachain disulfide couples C28 to C114. 4 residues coordinate Ca(2+): D209, D233, D234, and D237. The active-site Proton acceptor is the K273. Ca(2+)-binding residues include N402, S413, A416, D418, and E423.

The protein belongs to the polysaccharide lyase 9 family. Requires Ca(2+) as cofactor.

Its subcellular location is the secreted. The catalysed reaction is Eliminative cleavage of (1-&gt;4)-alpha-D-galacturonan to give oligosaccharides with 4-deoxy-alpha-D-galact-4-enuronosyl groups at their non-reducing ends.. The protein operates within glycan metabolism; pectin degradation; 2-dehydro-3-deoxy-D-gluconate from pectin: step 2/5. In terms of biological role, presents an endo-cleaving activity on polygalacturonate or partially methylated pectin. The protein is Pectate lyase L (pelL) of Dickeya chrysanthemi (Pectobacterium chrysanthemi).